Consider the following 592-residue polypeptide: Glutamine--fructose-6-phosphate aminotransferase [isomerizing] (592 aa).

Residue cysteine 2 is the Nucleophile; for GATase activity of the active site. One can recognise a Glutamine amidotransferase type-2 domain in the interval 2 to 217; it reads CGIVGYVGRD…DGEIADLTPD (216 aa). SIS domains follow at residues 277–416 and 441–582; these read IPFK…EREN and VAEK…VDQP. The active-site For Fru-6P isomerization activity is the lysine 587.

In terms of assembly, homodimer.

The protein localises to the cytoplasm. It catalyses the reaction D-fructose 6-phosphate + L-glutamine = D-glucosamine 6-phosphate + L-glutamate. Its function is as follows. Catalyzes the first step in hexosamine metabolism, converting fructose-6P into glucosamine-6P using glutamine as a nitrogen source. The sequence is that of Glutamine--fructose-6-phosphate aminotransferase [isomerizing] from Aquifex aeolicus (strain VF5).